The chain runs to 666 residues: Fructose-1,6-bisphosphatase class 3 (666 aa).

It belongs to the FBPase class 3 family. It depends on Mn(2+) as a cofactor.

It catalyses the reaction beta-D-fructose 1,6-bisphosphate + H2O = beta-D-fructose 6-phosphate + phosphate. Its pathway is carbohydrate biosynthesis; gluconeogenesis. The protein is Fructose-1,6-bisphosphatase class 3 of Parabacteroides distasonis (strain ATCC 8503 / DSM 20701 / CIP 104284 / JCM 5825 / NCTC 11152).